A 249-amino-acid chain; its full sequence is Acetylglutamate kinase (249 aa).

Residues 42-43, arginine 64, and asparagine 155 each bind substrate; that span reads GG.

Belongs to the acetylglutamate kinase family. ArgB subfamily.

It localises to the cytoplasm. It carries out the reaction N-acetyl-L-glutamate + ATP = N-acetyl-L-glutamyl 5-phosphate + ADP. The protein operates within amino-acid biosynthesis; L-arginine biosynthesis; N(2)-acetyl-L-ornithine from L-glutamate: step 2/4. Its function is as follows. Catalyzes the ATP-dependent phosphorylation of N-acetyl-L-glutamate. This Endomicrobium trichonymphae protein is Acetylglutamate kinase.